Here is a 454-residue protein sequence, read N- to C-terminus: Trigger factor (454 aa).

The 93-residue stretch at 169–261 (GDVAIADYEG…LKELKSRELP (93 aa)) folds into the PPIase FKBP-type domain.

Belongs to the FKBP-type PPIase family. Tig subfamily.

Its subcellular location is the cytoplasm. It carries out the reaction [protein]-peptidylproline (omega=180) = [protein]-peptidylproline (omega=0). In terms of biological role, involved in protein export. Acts as a chaperone by maintaining the newly synthesized protein in an open conformation. Functions as a peptidyl-prolyl cis-trans isomerase. The polypeptide is Trigger factor (Picosynechococcus sp. (strain ATCC 27264 / PCC 7002 / PR-6) (Agmenellum quadruplicatum)).